Here is a 191-residue protein sequence, read N- to C-terminus: Peptide methionine sulfoxide reductase (191 aa).

Disordered regions lie at residues 1–20 (MASS…TPEN) and 168–191 (EKGG…KCYG).

It belongs to the MsrA Met sulfoxide reductase family.

The enzyme catalyses L-methionyl-[protein] + [thioredoxin]-disulfide + H2O = L-methionyl-(S)-S-oxide-[protein] + [thioredoxin]-dithiol. It carries out the reaction [thioredoxin]-disulfide + L-methionine + H2O = L-methionine (S)-S-oxide + [thioredoxin]-dithiol. In terms of biological role, has an important function as a repair enzyme for proteins that have been inactivated by oxidation. Catalyzes the reversible oxidation-reduction of methionine sulfoxide in proteins to methionine. The polypeptide is Peptide methionine sulfoxide reductase (Fragaria ananassa (Strawberry)).